The following is a 196-amino-acid chain: Thymidine kinase (196 aa).

17-24 (GPMFAGKT) is an ATP binding site. Glu92 functions as the Proton acceptor in the catalytic mechanism. Phe121 serves as a coordination point for substrate. Positions 146 and 149 each coordinate Zn(2+). 166–170 (LILAG) is a substrate binding site. Zn(2+) is bound by residues Cys179 and Cys182.

This sequence belongs to the thymidine kinase family.

It catalyses the reaction thymidine + ATP = dTMP + ADP + H(+). Functionally, phosphorylates thymidine. ASFV replicates in the cytoplasm of infected cells and contains genes encoding a number of enzymes needed for DNA synthesis, including thymidine kinase. Important for growth in swine macrophages in vitro and is a virus virulence factor in swine. This is Thymidine kinase from Ornithodoros (relapsing fever ticks).